An 893-amino-acid chain; its full sequence is Protein bride of sevenless (893 aa).

The first 30 residues, 1–30 (MSGLQLIWKSPTQLVLFVLLITISCIDLCH), serve as a signal peptide directing secretion. The Extracellular portion of the chain corresponds to 32-530 (VGAATPTKKS…RIKLDTWVAT (499 aa)). 2 disordered regions span residues 36–66 (TPTKKSPPVRITKPQPVSSTTTAIPTTNEGS) and 82–102 (GTASSASSSSNGGSDDSSSTT). The span at 50-66 (QPVSSTTTAIPTTNEGS) shows a compositional bias: polar residues. N-linked (GlcNAc...) asparagine glycans are attached at residues Asn183, Asn307, Asn328, Asn471, and Asn482. 8 helical membrane passes run 531–551 (GLTAAILGLIATLAILVFIVV), 563–583 (PVTSILLLLSLILVFCSFVPF), 607–627 (LCGVRVFIMTLVYCFVFSLLL), 630–650 (AVMLASIGSEGGFLSHVNGYI), 653–673 (IICVLSVFVQVGMSVQLLVVM), 692–712 (WGLLAYDFLLLCSLVSLVPFI), 722–742 (GILIVIGAVLILIIWSVWIAL), and 752–772 (AAIPLGMQASGWAVLVGILIP). At 773–893 (RTFLIVRGIE…SPDHSKITRF (121 aa)) the chain is on the cytoplasmic side. Positions 858–893 (ANINPQRPPPHPQQSPSRSSVCSLPPSPDHSKITRF) are disordered.

This sequence belongs to the G-protein coupled receptor 3 family.

The protein localises to the cell membrane. Functionally, acts as a ligand for sevenless tyrosine-kinase receptor during eye development. The polypeptide is Protein bride of sevenless (boss) (Drosophila virilis (Fruit fly)).